A 245-amino-acid polypeptide reads, in one-letter code: 14-3-3 protein zeta/delta (245 aa).

The residue at position 1 (Met1) is an N-acetylmethionine. Lys3 carries the N6-acetyllysine modification. Ser58 carries the post-translational modification Phosphoserine; by PKA. The residue at position 68 (Lys68) is an N6-acetyllysine. Ser184, Ser207, and Ser210 each carry phosphoserine. Position 232 is a phosphothreonine; by CK1 (Thr232).

It belongs to the 14-3-3 family. Interacts with CDK16 and BSPRY. Interacts with WEE1 (C-terminal). Interacts with SAMSN1. Interacts with MLF1 (phosphorylated form); the interaction retains it in the cytoplasm. Interacts with Thr-phosphorylated ITGB2. Interacts with BCL2L11. Homodimer. Heterodimerizes with YWHAE. Homo- and heterodimerization is inhibited by phosphorylation on Ser-58. Interacts with FOXO4, NOXA1, SSH1 and ARHGEF2. Interacts with Pseudomonas aeruginosa exoS (unphosphorylated form). Interacts with BAX; the interaction occurs in the cytoplasm. Under stress conditions, MAPK8-mediated phosphorylation releases BAX to mitochondria. Interacts with phosphorylated RAF1; the interaction is inhibited when YWHAZ is phosphorylated on Thr-232. Interacts with TP53; the interaction enhances p53 transcriptional activity. The Ser-58 phosphorylated form inhibits this interaction and p53 transcriptional activity. Interacts with ABL1 (phosphorylated form); the interaction retains ABL1 in the cytoplasm. Interacts with PKA-phosphorylated AANAT; the interaction modulates AANAT enzymatic activity by increasing affinity for arylalkylamines and acetyl-CoA and protecting the enzyme from dephosphorylation and proteasomal degradation. It may also prevent thiol-dependent inactivation. Interacts with AKT1; the interaction phosphorylates YWHAZ and modulates dimerization. Interacts with GAB2 and TLK2. Interacts with the 'Thr-369' phosphorylated form of DAPK2. Interacts with PI4KB, TBC1D22A and TBC1D22B. Interacts with ZFP36L1 (via phosphorylated form); this interaction occurs in a p38 MAPK- and AKT-signaling pathways. Interacts with SLITRK1. Interacts with AK5, LDB1, MADD, MARK3, PDE1A and SMARCB1. Interacts with YWHAZ. Interacts with MEFV. Interacts with ADAM22 (via C-terminus). Post-translationally, the delta, brain-specific form differs from the zeta form in being phosphorylated. Phosphorylation on Ser-184 by MAPK8; promotes dissociation of BAX and translocation of BAX to mitochondria. Phosphorylation on Thr-232; inhibits binding of RAF1. Phosphorylated on Ser-58 by PKA and protein kinase C delta type catalytic subunit in a sphingosine-dependent fashion. Phosphorylation on Ser-58 by PKA; disrupts homodimerization and heterodimerization with YHAE and TP53. Highly expressed in brain (at protein level).

The protein resides in the cytoplasm. It is found in the melanosome. Adapter protein implicated in the regulation of a large spectrum of both general and specialized signaling pathways. Binds to a large number of partners, usually by recognition of a phosphoserine or phosphothreonine motif. Binding generally results in the modulation of the activity of the binding partner. Promotes cytosolic retention and inactivation of TFEB transcription factor by binding to phosphorylated TFEB. Induces ARHGEF7 activity on RAC1 as well as lamellipodia and membrane ruffle formation. In neurons, regulates spine maturation through the modulation of ARHGEF7 activity. This is 14-3-3 protein zeta/delta (YWHAZ) from Ovis aries (Sheep).